Consider the following 855-residue polypeptide: DNA mismatch repair protein MutS (855 aa).

613 to 620 contributes to the ATP binding site; sequence GPNMGGKS. The disordered stretch occupies residues 796–816; the sequence is TTSLPHEMPSQQSGKPASPMQ.

It belongs to the DNA mismatch repair MutS family.

In terms of biological role, this protein is involved in the repair of mismatches in DNA. It is possible that it carries out the mismatch recognition step. This protein has a weak ATPase activity. The polypeptide is DNA mismatch repair protein MutS (Pseudomonas aeruginosa (strain ATCC 15692 / DSM 22644 / CIP 104116 / JCM 14847 / LMG 12228 / 1C / PRS 101 / PAO1)).